The primary structure comprises 238 residues: Transcription termination/antitermination protein NusG (238 aa).

The protein belongs to the NusG family.

Its function is as follows. Participates in transcription elongation, termination and antitermination. In Mycobacterium tuberculosis (strain CDC 1551 / Oshkosh), this protein is Transcription termination/antitermination protein NusG.